The primary structure comprises 503 residues: Probable cytosol aminopeptidase (503 aa).

Residues lysine 274 and aspartate 279 each coordinate Mn(2+). Lysine 286 is a catalytic residue. 3 residues coordinate Mn(2+): aspartate 297, aspartate 356, and glutamate 358. The active site involves arginine 360.

It belongs to the peptidase M17 family. Mn(2+) serves as cofactor.

Its subcellular location is the cytoplasm. It carries out the reaction Release of an N-terminal amino acid, Xaa-|-Yaa-, in which Xaa is preferably Leu, but may be other amino acids including Pro although not Arg or Lys, and Yaa may be Pro. Amino acid amides and methyl esters are also readily hydrolyzed, but rates on arylamides are exceedingly low.. The enzyme catalyses Release of an N-terminal amino acid, preferentially leucine, but not glutamic or aspartic acids.. Functionally, presumably involved in the processing and regular turnover of intracellular proteins. Catalyzes the removal of unsubstituted N-terminal amino acids from various peptides. This is Probable cytosol aminopeptidase from Burkholderia pseudomallei (strain 1106a).